Consider the following 360-residue polypeptide: Cytokine receptor-like factor 2 (360 aa).

The first 18 residues, 1–18, serve as a signal peptide directing secretion; the sequence is MRAVTWAIVAMLLPRVLG. The Extracellular segment spans residues 27–238; it reads TGGVGDTLSV…PRTPGTPTPP (212 aa). An N-linked (GlcNAc...) asparagine glycan is attached at asparagine 62. Cysteine 77 and cysteine 90 are disulfide-bonded. The region spanning 123–214 is the Fibronectin type-III domain; sequence RPRPPWNVTL…PSKWTGVASL (92 aa). 2 N-linked (GlcNAc...) asparagine glycosylation sites follow: asparagine 129 and asparagine 174. An intrachain disulfide couples cysteine 185 to cysteine 223. The WSXWS motif signature appears at 205–209; it reads PSKWT. Residues 239–259 form a helical membrane-spanning segment; that stretch reads LALACGLAVALLTLVLLLALL. At 260-360 the chain is on the cytoplasmic side; that stretch reads RMRRVKEALL…LMGDSGYTTL (101 aa). The short motif at 268–276 is the Box 1 motif element; that stretch reads LLPGVPDPR.

This sequence belongs to the type I cytokine receptor family. Type 5 subfamily. As to quaternary structure, heterodimer of CRLF2 and IL7R. Expressed in all tissues examined including brain, thymus, lung, heart, muscle, stomach, small intestine, liver, kidney, spleen, testis and skin. Highest levels in thymus, liver and testis.

The protein localises to the membrane. Functionally, receptor for thymic stromal lymphopoietin (TSLP). Forms a functional complex with TSLP and IL7R which is capable of stimulating cell proliferation through activation of STAT3 and STAT5. Also activates JAK2. Implicated in the development of the hematopoietic system. This chain is Cytokine receptor-like factor 2 (Crlf2), found in Rattus norvegicus (Rat).